The following is a 515-amino-acid chain: Maturase K (515 aa).

The protein belongs to the intron maturase 2 family. MatK subfamily.

The protein resides in the plastid. Its subcellular location is the chloroplast. Functionally, usually encoded in the trnK tRNA gene intron. Probably assists in splicing its own and other chloroplast group II introns. The protein is Maturase K of Picea sitchensis (Sitka spruce).